The primary structure comprises 208 residues: Imidazole glycerol phosphate synthase subunit HisH (208 aa).

Positions 1–206 constitute a Glutamine amidotransferase type-1 domain; the sequence is MIVIVDYDTG…KEMTEDEALS (206 aa). Cysteine 79 serves as the catalytic Nucleophile. Catalysis depends on residues histidine 181 and glutamate 183.

As to quaternary structure, heterodimer of HisH and HisF.

The protein resides in the cytoplasm. The enzyme catalyses 5-[(5-phospho-1-deoxy-D-ribulos-1-ylimino)methylamino]-1-(5-phospho-beta-D-ribosyl)imidazole-4-carboxamide + L-glutamine = D-erythro-1-(imidazol-4-yl)glycerol 3-phosphate + 5-amino-1-(5-phospho-beta-D-ribosyl)imidazole-4-carboxamide + L-glutamate + H(+). It catalyses the reaction L-glutamine + H2O = L-glutamate + NH4(+). Its pathway is amino-acid biosynthesis; L-histidine biosynthesis; L-histidine from 5-phospho-alpha-D-ribose 1-diphosphate: step 5/9. Functionally, IGPS catalyzes the conversion of PRFAR and glutamine to IGP, AICAR and glutamate. The HisH subunit catalyzes the hydrolysis of glutamine to glutamate and ammonia as part of the synthesis of IGP and AICAR. The resulting ammonia molecule is channeled to the active site of HisF. This chain is Imidazole glycerol phosphate synthase subunit HisH, found in Lacticaseibacillus casei (strain BL23) (Lactobacillus casei).